The following is a 227-amino-acid chain: PKHD-type hydroxylase NE2125 (227 aa).

The region spanning 78–179 (KIVPPFFNRY…RLACFMFIQS (102 aa)) is the Fe2OG dioxygenase domain. Fe cation is bound by residues His-97, Asp-99, and His-160. A 2-oxoglutarate-binding site is contributed by Arg-170.

Fe(2+) serves as cofactor. The cofactor is L-ascorbate.

The chain is PKHD-type hydroxylase NE2125 from Nitrosomonas europaea (strain ATCC 19718 / CIP 103999 / KCTC 2705 / NBRC 14298).